The chain runs to 182 residues: NAD(P)H-quinone oxidoreductase subunit J (182 aa).

The protein belongs to the complex I 30 kDa subunit family. In terms of assembly, NDH-1 can be composed of about 15 different subunits; different subcomplexes with different compositions have been identified which probably have different functions.

Its subcellular location is the cellular thylakoid membrane. It carries out the reaction a plastoquinone + NADH + (n+1) H(+)(in) = a plastoquinol + NAD(+) + n H(+)(out). The enzyme catalyses a plastoquinone + NADPH + (n+1) H(+)(in) = a plastoquinol + NADP(+) + n H(+)(out). Its function is as follows. NDH-1 shuttles electrons from an unknown electron donor, via FMN and iron-sulfur (Fe-S) centers, to quinones in the respiratory and/or the photosynthetic chain. The immediate electron acceptor for the enzyme in this species is believed to be plastoquinone. Couples the redox reaction to proton translocation, and thus conserves the redox energy in a proton gradient. Cyanobacterial NDH-1 also plays a role in inorganic carbon-concentration. This chain is NAD(P)H-quinone oxidoreductase subunit J, found in Synechococcus sp. (strain WH7803).